Reading from the N-terminus, the 362-residue chain is UDP-N-acetylglucosamine--N-acetylmuramyl-(pentapeptide) pyrophosphoryl-undecaprenol N-acetylglucosamine transferase (362 aa).

UDP-N-acetyl-alpha-D-glucosamine-binding positions include 15–17 (TGG), Asn-127, Arg-165, Ser-191, Ile-247, 266–271 (ALTVSE), and Gln-292.

It belongs to the glycosyltransferase 28 family. MurG subfamily.

It is found in the cell inner membrane. It carries out the reaction di-trans,octa-cis-undecaprenyl diphospho-N-acetyl-alpha-D-muramoyl-L-alanyl-D-glutamyl-meso-2,6-diaminopimeloyl-D-alanyl-D-alanine + UDP-N-acetyl-alpha-D-glucosamine = di-trans,octa-cis-undecaprenyl diphospho-[N-acetyl-alpha-D-glucosaminyl-(1-&gt;4)]-N-acetyl-alpha-D-muramoyl-L-alanyl-D-glutamyl-meso-2,6-diaminopimeloyl-D-alanyl-D-alanine + UDP + H(+). It participates in cell wall biogenesis; peptidoglycan biosynthesis. Its function is as follows. Cell wall formation. Catalyzes the transfer of a GlcNAc subunit on undecaprenyl-pyrophosphoryl-MurNAc-pentapeptide (lipid intermediate I) to form undecaprenyl-pyrophosphoryl-MurNAc-(pentapeptide)GlcNAc (lipid intermediate II). This Shewanella sp. (strain MR-4) protein is UDP-N-acetylglucosamine--N-acetylmuramyl-(pentapeptide) pyrophosphoryl-undecaprenol N-acetylglucosamine transferase.